A 222-amino-acid polypeptide reads, in one-letter code: N-(5'-phosphoribosyl)anthranilate isomerase (222 aa).

It belongs to the TrpF family.

The enzyme catalyses N-(5-phospho-beta-D-ribosyl)anthranilate = 1-(2-carboxyphenylamino)-1-deoxy-D-ribulose 5-phosphate. It participates in amino-acid biosynthesis; L-tryptophan biosynthesis; L-tryptophan from chorismate: step 3/5. In Rhizobium johnstonii (strain DSM 114642 / LMG 32736 / 3841) (Rhizobium leguminosarum bv. viciae), this protein is N-(5'-phosphoribosyl)anthranilate isomerase.